We begin with the raw amino-acid sequence, 519 residues long: Cytochrome P450 52A13 (519 aa).

Cys-466 provides a ligand contact to heme.

This sequence belongs to the cytochrome P450 family. Heme serves as cofactor.

It is found in the membrane. In terms of biological role, together with an NADPH cytochrome P450 the enzyme system catalyzes the terminal hydroxylation as the first step in the assimilation of alkanes and fatty acids. This chain is Cytochrome P450 52A13 (CYP52A13), found in Debaryomyces hansenii (Yeast).